The primary structure comprises 92 residues: Acyl-CoA-binding domain-containing protein 6 (92 aa).

One can recognise an ACB domain in the interval 3–88 (LKEEFEEHAE…VKQLLEVAAS (86 aa)). Residues 30-34 (YGLYK), K52, K56, and Y75 each bind an acyl-CoA.

It belongs to the ACBP family. Interacts with PDLP8. As to expression, mostly expressed in seeds, stems, and siliques, and, to a lower extent, in leaves, flowers, and roots (at protein level). Highly expressed in root and shoot phloem companion cells.

The protein localises to the cytoplasm. It localises to the cell membrane. Its function is as follows. Binds medium- and long-chain acyl-CoA esters with very high affinity. May function as an intracellular carrier of acyl-CoA esters. Confers resistance to cold and freezing. Interacts with phosphatidylcholine and derivatives, but not phosphatidic acid and lysophosphatidylcholine. May be involved in phospholipid metabolism. In Arabidopsis thaliana (Mouse-ear cress), this protein is Acyl-CoA-binding domain-containing protein 6 (ACBP6).